Consider the following 506-residue polypeptide: Maturase K (506 aa).

Belongs to the intron maturase 2 family. MatK subfamily.

Its subcellular location is the plastid. The protein resides in the chloroplast. Its function is as follows. Usually encoded in the trnK tRNA gene intron. Probably assists in splicing its own and other chloroplast group II introns. The protein is Maturase K of Trifolium spumosum (Mediterranean clover).